The sequence spans 208 residues: Imidazoleglycerol-phosphate dehydratase (208 aa).

This sequence belongs to the imidazoleglycerol-phosphate dehydratase family.

Its subcellular location is the cytoplasm. The catalysed reaction is D-erythro-1-(imidazol-4-yl)glycerol 3-phosphate = 3-(imidazol-4-yl)-2-oxopropyl phosphate + H2O. The protein operates within amino-acid biosynthesis; L-histidine biosynthesis; L-histidine from 5-phospho-alpha-D-ribose 1-diphosphate: step 6/9. The polypeptide is Imidazoleglycerol-phosphate dehydratase (Anaeromyxobacter dehalogenans (strain 2CP-1 / ATCC BAA-258)).